A 414-amino-acid polypeptide reads, in one-letter code: Putative polyketide beta-ketoacyl synthase 2 (414 aa).

A Ketosynthase family 3 (KS3) domain is found at 4–407 (PRRAVVTGLG…GNNSALVLRR (404 aa)).

The protein belongs to the thiolase-like superfamily. Beta-ketoacyl-ACP synthases family.

Involved in developmentally regulated synthesis of a compound biosynthetically related to polyketide antibiotics which is essential for spore color in Streptomyces halstedii. This is Putative polyketide beta-ketoacyl synthase 2 (sch2) from Streptomyces halstedii.